The following is a 303-amino-acid chain: Probable cell division protein WhiA (303 aa).

The H-T-H motif DNA-binding region spans 272 to 303 (SIQQLADSLSTPLTKSGVNHRLRKINKIADEL).

Belongs to the WhiA family.

In terms of biological role, involved in cell division and chromosome segregation. In Streptococcus pneumoniae serotype 4 (strain ATCC BAA-334 / TIGR4), this protein is Probable cell division protein WhiA.